We begin with the raw amino-acid sequence, 750 residues long: 5-methyltetrahydropteroyltriglutamate--homocysteine methyltransferase (750 aa).

Residues 15–18 (RELK) and lysine 114 each bind 5-methyltetrahydropteroyltri-L-glutamate. Residues 425 to 427 (IGS) and glutamate 478 contribute to the L-homocysteine site. L-methionine contacts are provided by residues 425-427 (IGS) and glutamate 478. Tryptophan 555 serves as a coordination point for 5-methyltetrahydropteroyltri-L-glutamate. Aspartate 593 contacts L-homocysteine. Residue aspartate 593 coordinates L-methionine. Glutamate 599 contacts 5-methyltetrahydropteroyltri-L-glutamate. Zn(2+) contacts are provided by histidine 636, cysteine 638, and glutamate 660. Catalysis depends on histidine 689, which acts as the Proton donor. Cysteine 721 is a binding site for Zn(2+).

The protein belongs to the vitamin-B12 independent methionine synthase family. It depends on Zn(2+) as a cofactor.

The catalysed reaction is 5-methyltetrahydropteroyltri-L-glutamate + L-homocysteine = tetrahydropteroyltri-L-glutamate + L-methionine. It participates in amino-acid biosynthesis; L-methionine biosynthesis via de novo pathway; L-methionine from L-homocysteine (MetE route): step 1/1. Its function is as follows. Catalyzes the transfer of a methyl group from 5-methyltetrahydrofolate to homocysteine resulting in methionine formation. The sequence is that of 5-methyltetrahydropteroyltriglutamate--homocysteine methyltransferase from Streptococcus sanguinis (strain SK36).